A 144-amino-acid chain; its full sequence is uncharacterized protein (144 aa).

Residues 72–90 (VAIGTSLIVGAGVAMEVSV) form a helical membrane-spanning segment.

The protein to yeast YCL21w.

Its subcellular location is the membrane. This is an uncharacterized protein from Saccharomyces cerevisiae (strain ATCC 204508 / S288c) (Baker's yeast).